Consider the following 269-residue polypeptide: MSHGGGGHAAELFPENQVLVIGAVLSLIGMYIAHFVPSLAMLLGGLLAAGACVAGANTTRRVAAYGLGTGVPSIGMVSLGMGTISALAGVLIPSVLAGSVALPFDLVLATPIIAAVVAIIVGFIVGKLTQNPVGMKVPIIVSSMTKLSLMGALAILGFCTAFAGGFSADLIINGAINNGIIALAFIAAGMSILHPFNACIGPNESHKRTITLATACGLMAWLVFSIAKLDIVSILVAAVFWIYTYGSFVSMSLADACEVKYVPELPKKE.

The next 8 membrane-spanning stretches (helical) occupy residues 18–38 (VLVI…FVPS), 39–59 (LAML…ANTT), 62–82 (VAAY…LGMG), 84–104 (ISAL…ALPF), 106–126 (LVLA…FIVG), 152–172 (ALAI…DLII), 180–200 (IIAL…NACI), and 222–242 (LVFS…VFWI).

Belongs to the MtrC family. As to quaternary structure, the complex is composed of 8 subunits; MtrA, MtrB, MtrC, MtrD, MtrE, MtrF, MtrG and MtrH.

Its subcellular location is the cell membrane. It carries out the reaction 5-methyl-5,6,7,8-tetrahydromethanopterin + coenzyme M + 2 Na(+)(in) = 5,6,7,8-tetrahydromethanopterin + methyl-coenzyme M + 2 Na(+)(out). It participates in one-carbon metabolism; methanogenesis from CO(2); methyl-coenzyme M from 5,10-methylene-5,6,7,8-tetrahydromethanopterin: step 2/2. Functionally, part of a complex that catalyzes the formation of methyl-coenzyme M and tetrahydromethanopterin from coenzyme M and methyl-tetrahydromethanopterin. This is an energy-conserving, sodium-ion translocating step. In Methanococcus vannielii (strain ATCC 35089 / DSM 1224 / JCM 13029 / OCM 148 / SB), this protein is Tetrahydromethanopterin S-methyltransferase subunit C.